Here is a 113-residue protein sequence, read N- to C-terminus: N-alpha-acetyltransferase 38-A, NatC auxiliary subunit (113 aa).

A disordered region spans residues 1–29 (MAAVLEENGCSRQSSPSAGDSDAEPGDTA). Positions 28-106 (TARHKLESLL…IVSIQVELES (79 aa)) constitute a Sm domain.

The protein belongs to the snRNP Sm proteins family. In terms of assembly, component of the N-terminal acetyltransferase C (NatC) complex, which is composed of naa35, naa38 and naa30.

The protein localises to the cytoplasm. In terms of biological role, auxillary component of the N-terminal acetyltransferase C (NatC) complex which catalyzes acetylation of N-terminal methionine residues. This is N-alpha-acetyltransferase 38-A, NatC auxiliary subunit (naa38-a) from Xenopus laevis (African clawed frog).